The primary structure comprises 64 residues: Large ribosomal subunit protein bL35 (64 aa).

Belongs to the bacterial ribosomal protein bL35 family.

This chain is Large ribosomal subunit protein bL35, found in Coxiella burnetii (strain RSA 493 / Nine Mile phase I).